The sequence spans 380 residues: MASLRKTHPLLKIANDALVDLPTPINISVWWNFGSLLGLCLIAQILTGLFLAMHYTADIATAFSSVAHICRDVNYGWLIRNLHANGASFFFICLYLHVGRGLYYGSYLYKETWNIGVVLLLLVMMTAFVGYVLPWGQMSFWGATVITNLLSAVPYVGNTLVQWIWGGFSVDNATLTRFFAFHFLFPFIIAAMVLLHLLFLHETGSSNPTGINSGADKIPFHPYFTYKDLFGFVILLLALSILTLFSPNLLGDPDNFIPANPLVTPPHIKPEWYFLFAYAILRSIPNKLGGVLALLASILILMVVPLLHTSKQRGLMFRPLTQILFWTLVADVAILTWIGGMPVEHPFITVGQVASVLYFALFLILIPATGWAENKALKWN.

A run of 4 helical transmembrane segments spans residues 33-53, 77-98, 113-133, and 178-198; these read FGSL…FLAM, WLIR…YLHV, WNIG…GYVL, and FFAF…LHLL. The heme b site is built by His83 and His97. Heme b-binding residues include His182 and His196. His201 is a binding site for a ubiquinone. The next 4 helical transmembrane spans lie at 226 to 246, 288 to 308, 320 to 340, and 347 to 367; these read YKDL…TLFS, LGGV…PLLH, LTQI…WIGG, and FITV…ILIP.

It belongs to the cytochrome b family. As to quaternary structure, the cytochrome bc1 complex contains 3 respiratory subunits (MT-CYB, CYC1 and UQCRFS1), 2 core proteins (UQCRC1 and UQCRC2) and probably 6 low-molecular weight proteins. Requires heme b as cofactor.

Its subcellular location is the mitochondrion inner membrane. In terms of biological role, component of the ubiquinol-cytochrome c reductase complex (complex III or cytochrome b-c1 complex) that is part of the mitochondrial respiratory chain. The b-c1 complex mediates electron transfer from ubiquinol to cytochrome c. Contributes to the generation of a proton gradient across the mitochondrial membrane that is then used for ATP synthesis. This chain is Cytochrome b (mt-cyb), found in Allocyttus niger (Black oreo dory).